A 217-amino-acid polypeptide reads, in one-letter code: Large ribosomal subunit protein uL1 (217 aa).

N-acetylserine is present on S2. Position 11 is a phosphotyrosine (Y11). K91 and K106 each carry N6-acetyllysine. N6-acetyllysine; alternate is present on K118. Residue K118 forms a Glycyl lysine isopeptide (Lys-Gly) (interchain with G-Cter in SUMO1); alternate linkage. K118 is covalently cross-linked (Glycyl lysine isopeptide (Lys-Gly) (interchain with G-Cter in SUMO2); alternate). K161 participates in a covalent cross-link: Glycyl lysine isopeptide (Lys-Gly) (interchain with G-Cter in SUMO2).

It belongs to the universal ribosomal protein uL1 family. As to quaternary structure, component of the large ribosomal subunit.

It is found in the cytoplasm. In terms of biological role, component of the large ribosomal subunit. The ribosome is a large ribonucleoprotein complex responsible for the synthesis of proteins in the cell. This chain is Large ribosomal subunit protein uL1 (Rpl10a), found in Mus musculus (Mouse).